Consider the following 275-residue polypeptide: Mitochondrial prohibitin complex protein 1 (275 aa).

Residues 180–213 (REFTEAVEMKQVAQQEAEKARYLVEKAEQMKIAA) adopt a coiled-coil conformation.

The protein belongs to the prohibitin family. High molecular weight complex that consist of phb-1 and phb-2.

The protein localises to the mitochondrion inner membrane. In terms of biological role, PHB proteins are essential during embryonic development and are required for somatic and germline differentiation in the larval gonad. A deficiency in PHB proteins results in altered mitochondrial biogenesis in body wall muscle cells. This chain is Mitochondrial prohibitin complex protein 1 (phb-1), found in Caenorhabditis elegans.